The chain runs to 693 residues: Phosphoribosylformylglycinamidine synthase subunit PurL (693 aa).

H34 is a catalytic residue. ATP-binding residues include Y37 and K76. Residue E78 participates in Mg(2+) binding. Residues 79 to 82 (SHNH) and R101 each bind substrate. H80 acts as the Proton acceptor in catalysis. D102 contacts Mg(2+). Q222 provides a ligand contact to substrate. D248 provides a ligand contact to Mg(2+). 292–294 (ETQ) lines the substrate pocket. ATP contacts are provided by D470 and G507. A substrate-binding site is contributed by S510.

This sequence belongs to the FGAMS family. As to quaternary structure, monomer. Part of the FGAM synthase complex composed of 1 PurL, 1 PurQ and 2 PurS subunits.

Its subcellular location is the cytoplasm. It catalyses the reaction N(2)-formyl-N(1)-(5-phospho-beta-D-ribosyl)glycinamide + L-glutamine + ATP + H2O = 2-formamido-N(1)-(5-O-phospho-beta-D-ribosyl)acetamidine + L-glutamate + ADP + phosphate + H(+). It functions in the pathway purine metabolism; IMP biosynthesis via de novo pathway; 5-amino-1-(5-phospho-D-ribosyl)imidazole from N(2)-formyl-N(1)-(5-phospho-D-ribosyl)glycinamide: step 1/2. Its function is as follows. Part of the phosphoribosylformylglycinamidine synthase complex involved in the purines biosynthetic pathway. Catalyzes the ATP-dependent conversion of formylglycinamide ribonucleotide (FGAR) and glutamine to yield formylglycinamidine ribonucleotide (FGAM) and glutamate. The FGAM synthase complex is composed of three subunits. PurQ produces an ammonia molecule by converting glutamine to glutamate. PurL transfers the ammonia molecule to FGAR to form FGAM in an ATP-dependent manner. PurS interacts with PurQ and PurL and is thought to assist in the transfer of the ammonia molecule from PurQ to PurL. The protein is Phosphoribosylformylglycinamidine synthase subunit PurL of Pyrobaculum neutrophilum (strain DSM 2338 / JCM 9278 / NBRC 100436 / V24Sta) (Thermoproteus neutrophilus).